The sequence spans 387 residues: 3-ketoacyl-CoA thiolase (387 aa).

C91 serves as the catalytic Acyl-thioester intermediate. Catalysis depends on proton acceptor residues H343 and C373.

It belongs to the thiolase-like superfamily. Thiolase family. In terms of assembly, heterotetramer of two alpha chains (FadB) and two beta chains (FadA).

It localises to the cytoplasm. The catalysed reaction is an acyl-CoA + acetyl-CoA = a 3-oxoacyl-CoA + CoA. Its pathway is lipid metabolism; fatty acid beta-oxidation. Catalyzes the final step of fatty acid oxidation in which acetyl-CoA is released and the CoA ester of a fatty acid two carbons shorter is formed. In Shigella dysenteriae serotype 1 (strain Sd197), this protein is 3-ketoacyl-CoA thiolase.